The primary structure comprises 786 residues: MNEKSLRILEFYKVKDELKKYTNTNAAKDLVDNLKPYDNIHDVREHLEETEEALKLIISRGNPPFDGVYDVRQGVKMAQKGSILMPAQIFRIGAILKASRRFEKYIKAKGEGEGFRIIEDICQGIVLLKGLEDKIFISIESEDEISDRASSLLYNIRKSIRDKNASVRDKVNSLIRNYSSYLQDNLYTIRGDRYVLPVRAENKALVPGLVHDQSSSGSTLYIEPMALVNLNNEIKELKLKEKAEIDRILYELSKEIHDNIVVIKNNADIIWELDFIFAKAKFGSELNGNIPIVNDNCIIDIVEGRHPLIDRKTVVPMDVYMGKDFTCLVITGPNTGGKTVALKTMGLLHIMALSGLMIPARENSTVGFFTEIFADIGDEQSIEQNLSTFSSHMTNIINIINNSDEKSLILFDELGAGTDPTEGAALAVSILENLKDRGSMIVATTHYSELKAYALKSNGVENASVEFDVDTLKPTYKLMIGIPGKSNAFEISKRLGLPEFIIKAARENIASEALKFEDLIQSLQEKRIKAENYFREAEILKREAAKIKEKYEQKAIRLQEVRDKSITEAHRKAREIIRESKEEADRILKDIRELEKMGYSSSVKHELEERRKMLKDKLENVEENLYKAKSEDGQRLKSVKEGEEVFIPSLNQKVLVLSKPDNKGEVQVQAGIMKISVNLKELRAPKGSTKNTDKKLKREANLNLRSVATSVDLRGMDSIEAAYITDKYLDDAYVAGLKEVTIIHGKGTGILRSSITNMLKSHSHVKNYRIGEYGEGGTGVTIVELK.

332 to 339 contacts ATP; the sequence is GPNTGGKT. A Smr domain is found at 711-786; sequence VDLRGMDSIE…GTGVTIVELK (76 aa).

Belongs to the DNA mismatch repair MutS family. MutS2 subfamily. As to quaternary structure, homodimer. Binds to stalled ribosomes, contacting rRNA.

Its function is as follows. Endonuclease that is involved in the suppression of homologous recombination and thus may have a key role in the control of bacterial genetic diversity. In terms of biological role, acts as a ribosome collision sensor, splitting the ribosome into its 2 subunits. Detects stalled/collided 70S ribosomes which it binds and splits by an ATP-hydrolysis driven conformational change. Acts upstream of the ribosome quality control system (RQC), a ribosome-associated complex that mediates the extraction of incompletely synthesized nascent chains from stalled ribosomes and their subsequent degradation. Probably generates substrates for RQC. This is Endonuclease MutS2 from Clostridium kluyveri (strain NBRC 12016).